A 400-amino-acid chain; its full sequence is MAIEKELLDQLLAGRDPSEVFGKDGLLDDLKKALSERILNAELDDHLDVERLEGGPANRRNGSSKKTVLTGTSKMTLTIPRDRAGTFDPKLIARYQRRFPDFDDKIISMYARGMTVREIQGHLEELYGIDVSPDLISAVTDTVLEAVGEWQNRPLELCYPLVFFDAIRVKIRDEGFVRNKAVYVALAVLADGSKEILGLWIEQTEGAKFWLRVMNELKNRGCQDILIAVVDGLKGFPEAITAVFPQTIVQTCIVHLIRHSLEFVSYKDRRTVVPALRAIYRARDAEAGLKALEAFEEGYWGQKYPAIAQSWRRNWEHVVPFFAFPEGVRRIIYTTNAIEALNSKLRRAVRSRGHFPGDEAAMKLLYLVLNNAAEQWKRAPREWVEAKTQFAVIFGERFFN.

The protein belongs to the transposase mutator family.

Its function is as follows. Required for the transposition of the insertion element. The polypeptide is Transposase for insertion sequence element ISRM3 (Rhizobium meliloti (strain 1021) (Ensifer meliloti)).